The sequence spans 670 residues: Segment polarity protein dishevelled homolog DVL-1 (670 aa).

The DIX domain maps to 1-85; the sequence is MAETKIIYHM…RVVSWLVLAE (85 aa). The tract at residues 89-237 is disordered; sequence SDAGSQGTDS…LRQADRASSF (149 aa). Residues 142–151 are compositionally biased toward basic residues; it reads SHRRERARRR. The span at 152 to 171 shows a compositional bias: basic and acidic residues; sequence NREEAARTNGHPRGDRRRDV. Positions 176–192 are enriched in low complexity; the sequence is DSASTALSSELESSSFV. Residue S194 is modified to Phosphoserine. Residues 200–214 show a composition bias toward low complexity; it reads TSRLSSSTEQSTSSR. The segment covering 215–228 has biased composition (basic residues); it reads LIRKHKRRRRKQRL. The PDZ domain occupies 251–323; sequence TVTLNMERHH…NDDAVRVLRE (73 aa). In terms of domain architecture, DEP spans 400 to 474; the sequence is PDSGLEIRDR…SEQCYYVFGD (75 aa). The tract at residues 518-642 is disordered; the sequence is PGPPPCFPPA…PGGPPVRELA (125 aa). A compositionally biased stretch (low complexity) spans 526–555; sequence PAYQDPGFSYGSGSTGSQQSEGSKSSGSTR. The segment covering 600–611 has biased composition (polar residues); the sequence is SRGSSPRSQASA.

This sequence belongs to the DSH family. In terms of assembly, interacts with CXXC4. Interacts (via PDZ domain) with NXN. Interacts with BRD7 and INVS. Interacts (via PDZ domain) with VANGL1 and VANGL2 (via C-terminus). Interacts with ARRB1; the interaction is enhanced by phosphorylation of DVL1. Interacts with CYLD. Interacts (via PDZ domain) with RYK. Self-associates (via DIX domain) and forms higher homooligomers. Interacts (via PDZ domain) with DACT1 and FZD7, where DACT1 and FZD7 compete for the same binding site. Interacts (via DEP domain) with MUSK; the interaction is direct and mediates the formation a DVL1, MUSK and PAK1 ternary complex involved in AChR clustering. Interacts (via PDZ domain) with TMEM88. Interacts with DCDC2. Interacts with FOXK2. Interacts with PKD1 (via extracellular domain). Interacts (via PDZ domain) with CCDC88C/DAPLE; competes with CCDC88C for binding to frizzled receptor FZD7 and dissociates from CCDC88C following initiation of non-canonical Wnt signaling when CCDC88C displaces DVL1 from ligand-activated FZD7. Ubiquitinated; undergoes both 'Lys-48'-linked ubiquitination, leading to its subsequent degradation by the ubiquitin-proteasome pathway, and 'Lys-63'-linked ubiquitination. The interaction with INVS is required for ubiquitination. Deubiquitinated by CYLD, which acts on 'Lys-63'-linked ubiquitin chains.

The protein localises to the cell membrane. It is found in the cytoplasm. The protein resides in the cytosol. It localises to the cytoplasmic vesicle. Functionally, participates in Wnt signaling by binding to the cytoplasmic C-terminus of frizzled family members and transducing the Wnt signal to down-stream effectors. Plays a role both in canonical and non-canonical Wnt signaling. Plays a role in the signal transduction pathways mediated by multiple Wnt genes. Required for LEF1 activation upon WNT1 and WNT3A signaling. DVL1 and PAK1 form a ternary complex with MUSK which is important for MUSK-dependent regulation of AChR clustering during the formation of the neuromuscular junction (NMJ). In Pan troglodytes (Chimpanzee), this protein is Segment polarity protein dishevelled homolog DVL-1 (DVL1).